The following is a 422-amino-acid chain: Serine hydroxymethyltransferase (422 aa).

(6S)-5,6,7,8-tetrahydrofolate contacts are provided by residues L118 and G122 to L124. The residue at position 227 (K227) is an N6-(pyridoxal phosphate)lysine. E242 lines the (6S)-5,6,7,8-tetrahydrofolate pocket.

The protein belongs to the SHMT family. Homodimer. Requires pyridoxal 5'-phosphate as cofactor.

The protein resides in the cytoplasm. The catalysed reaction is (6R)-5,10-methylene-5,6,7,8-tetrahydrofolate + glycine + H2O = (6S)-5,6,7,8-tetrahydrofolate + L-serine. It participates in one-carbon metabolism; tetrahydrofolate interconversion. Its pathway is amino-acid biosynthesis; glycine biosynthesis; glycine from L-serine: step 1/1. In terms of biological role, catalyzes the reversible interconversion of serine and glycine with tetrahydrofolate (THF) serving as the one-carbon carrier. This reaction serves as the major source of one-carbon groups required for the biosynthesis of purines, thymidylate, methionine, and other important biomolecules. Also exhibits THF-independent aldolase activity toward beta-hydroxyamino acids, producing glycine and aldehydes, via a retro-aldol mechanism. The chain is Serine hydroxymethyltransferase from Sulfurihydrogenibium sp. (strain YO3AOP1).